The following is a 55-amino-acid chain: MAKGGREKIKLESTAGTGHFYTTDKNKKLHPEKMELMKFDPKARKHVAYKEVKLK.

Over residues 1–11 the composition is skewed to basic and acidic residues; the sequence is MAKGGREKIKL. Positions 1 to 26 are disordered; sequence MAKGGREKIKLESTAGTGHFYTTDKN.

Belongs to the bacterial ribosomal protein bL33 family.

In Methylibium petroleiphilum (strain ATCC BAA-1232 / LMG 22953 / PM1), this protein is Large ribosomal subunit protein bL33.